Reading from the N-terminus, the 557-residue chain is Potassium-transporting ATPase potassium-binding subunit (557 aa).

Transmembrane regions (helical) follow at residues 5–25 (GFLL…PLGS), 63–83 (LSAI…MLLG), 132–152 (GLTV…FALI), 170–190 (LLRI…LFFI), 253–273 (FVQM…FGEV), 283–303 (LLWA…WAEV), 329–349 (VLVS…AVIA), 356–376 (ALGG…FGGV), 379–399 (GLYG…LMIG), 416–436 (LTAL…ALAM), 484–504 (LLAL…MAIA), and 526–546 (LFVG…FIPA).

This sequence belongs to the KdpA family. In terms of assembly, the system is composed of three essential subunits: KdpA, KdpB and KdpC.

It localises to the cell inner membrane. In terms of biological role, part of the high-affinity ATP-driven potassium transport (or Kdp) system, which catalyzes the hydrolysis of ATP coupled with the electrogenic transport of potassium into the cytoplasm. This subunit binds the periplasmic potassium ions and delivers the ions to the membrane domain of KdpB through an intramembrane tunnel. The sequence is that of Potassium-transporting ATPase potassium-binding subunit from Escherichia coli (strain UTI89 / UPEC).